Consider the following 89-residue polypeptide: Small ribosomal subunit protein uS15 (89 aa).

This sequence belongs to the universal ribosomal protein uS15 family. Part of the 30S ribosomal subunit. Forms a bridge to the 50S subunit in the 70S ribosome, contacting the 23S rRNA.

Functionally, one of the primary rRNA binding proteins, it binds directly to 16S rRNA where it helps nucleate assembly of the platform of the 30S subunit by binding and bridging several RNA helices of the 16S rRNA. In terms of biological role, forms an intersubunit bridge (bridge B4) with the 23S rRNA of the 50S subunit in the ribosome. The sequence is that of Small ribosomal subunit protein uS15 from Brevibacillus brevis (strain 47 / JCM 6285 / NBRC 100599).